Here is a 159-residue protein sequence, read N- to C-terminus: Transcription elongation factor GreA (159 aa).

Residues 45-67 adopt a coiled-coil conformation; that stretch reads NAEYHEARKEQSFVEGKIRELQL.

The protein belongs to the GreA/GreB family.

Its function is as follows. Necessary for efficient RNA polymerase transcription elongation past template-encoded arresting sites. The arresting sites in DNA have the property of trapping a certain fraction of elongating RNA polymerases that pass through, resulting in locked ternary complexes. Cleavage of the nascent transcript by cleavage factors such as GreA or GreB allows the resumption of elongation from the new 3'terminus. GreA releases sequences of 2 to 3 nucleotides. The chain is Transcription elongation factor GreA from Neorickettsia sennetsu (strain ATCC VR-367 / Miyayama) (Ehrlichia sennetsu).